The sequence spans 303 residues: Uridine diphosphate glucose pyrophosphatase NUDT22 (303 aa).

Substrate contacts are provided by Phe56, Tyr87, Arg139, Ala144, Asp151, His156, and Glu158. Residues Ala118–Val285 enclose the Nudix hydrolase domain. Residues Gly148–Pro168 are disordered. A Nudix box motif is present at residues Gly175–Leu196. Residues Glu189 and Glu193 each coordinate Mg(2+). Ser274 serves as a coordination point for substrate.

Belongs to the Nudix hydrolase family. Mg(2+) serves as cofactor.

The catalysed reaction is UDP-sugar + H2O = UMP + alpha-D-aldose 1-phosphate.. In terms of biological role, hydrolyzes UDP-glucose to glucose 1-phosphate and UMP and UDP-galactose to galactose 1-phosphate and UMP. Preferred substrate is UDP-glucose. This Homo sapiens (Human) protein is Uridine diphosphate glucose pyrophosphatase NUDT22 (NUDT22).